The following is a 404-amino-acid chain: Zinc finger protein zfs1 (404 aa).

Residues 134 to 149 show a composition bias toward polar residues; the sequence is SYLHSGSSPHGNTSNH. 2 disordered regions span residues 134 to 168 and 259 to 322; these read SYLH…TGSG and SNAS…APNG. Over residues 150–168 the composition is skewed to low complexity; that stretch reads PSPISSLESLPSRSSTGSG. Polar residues predominate over residues 259 to 283; it reads SNASIRNAPSNLSKQFSPSGNSPLT. Low complexity predominate over residues 304–317; it reads GSASHPHGSGSSNG. C3H1-type zinc fingers lie at residues 326 to 354 and 364 to 392; these read LYKT…HGNQ and KYKS…HDES.

Interacts with moc3.

Its subcellular location is the cytoplasm. It is found in the nucleus. Functionally, binds to specific AU-rich elements (ARE) in the 3'-untranslated region of target mRNAs and promotes their degradation. Binds to ARE present in the arz1 mRNA and stimulates the rate of arz1 mRNA decay. Required for coordination of septum formation with exit from mitosis. Involved in the mating response pathway. Induces sexual development and ascus formation. The chain is Zinc finger protein zfs1 (zfs1) from Schizosaccharomyces pombe (strain 972 / ATCC 24843) (Fission yeast).